The chain runs to 242 residues: DNA repair protein RecO (242 aa).

It belongs to the RecO family. In terms of assembly, monomer.

Involved in DNA repair and RecF pathway recombination. The protein is DNA repair protein RecO of Shigella sonnei (strain Ss046).